A 169-amino-acid chain; its full sequence is Nucleoside-triphosphatase THEP1 (169 aa).

ATP-binding positions include 11–18 (GEPGVGKT) and 100–107 (IIGIDEIG).

This sequence belongs to the THEP1 NTPase family.

It catalyses the reaction a ribonucleoside 5'-triphosphate + H2O = a ribonucleoside 5'-diphosphate + phosphate + H(+). Functionally, has nucleotide phosphatase activity towards ATP, GTP, CTP, TTP and UTP. May hydrolyze nucleoside diphosphates with lower efficiency. This Sulfurisphaera tokodaii (strain DSM 16993 / JCM 10545 / NBRC 100140 / 7) (Sulfolobus tokodaii) protein is Nucleoside-triphosphatase THEP1.